A 198-amino-acid polypeptide reads, in one-letter code: Orotate phosphoribosyltransferase (198 aa).

5-phospho-alpha-D-ribose 1-diphosphate contacts are provided by residues R108, K109, K112, H114, and 135–143 (EDVVTTGKS). Residues T139 and R167 each contribute to the orotate site.

This sequence belongs to the purine/pyrimidine phosphoribosyltransferase family. PyrE subfamily. Homodimer. Mg(2+) is required as a cofactor.

It catalyses the reaction orotidine 5'-phosphate + diphosphate = orotate + 5-phospho-alpha-D-ribose 1-diphosphate. Its pathway is pyrimidine metabolism; UMP biosynthesis via de novo pathway; UMP from orotate: step 1/2. In terms of biological role, catalyzes the transfer of a ribosyl phosphate group from 5-phosphoribose 1-diphosphate to orotate, leading to the formation of orotidine monophosphate (OMP). This Synechocystis sp. (strain ATCC 27184 / PCC 6803 / Kazusa) protein is Orotate phosphoribosyltransferase.